Consider the following 277-residue polypeptide: MEMO1 family protein MTH_45 (277 aa).

It belongs to the MEMO1 family.

This Methanothermobacter thermautotrophicus (strain ATCC 29096 / DSM 1053 / JCM 10044 / NBRC 100330 / Delta H) (Methanobacterium thermoautotrophicum) protein is MEMO1 family protein MTH_45.